A 142-amino-acid chain; its full sequence is Large ribosomal subunit protein uL22c (142 aa).

This sequence belongs to the universal ribosomal protein uL22 family. In terms of assembly, part of the 50S ribosomal subunit.

The protein resides in the plastid. It localises to the chloroplast. In terms of biological role, this protein binds specifically to 23S rRNA. The globular domain of the protein is located near the polypeptide exit tunnel on the outside of the subunit, while an extended beta-hairpin is found that lines the wall of the exit tunnel in the center of the 70S ribosome. This is Large ribosomal subunit protein uL22c (rpl22) from Pinus thunbergii (Japanese black pine).